The sequence spans 155 residues: Small ribosomal subunit protein uS7c (155 aa).

Belongs to the universal ribosomal protein uS7 family. In terms of assembly, part of the 30S ribosomal subunit.

The protein resides in the plastid. Its subcellular location is the chloroplast. In terms of biological role, one of the primary rRNA binding proteins, it binds directly to 16S rRNA where it nucleates assembly of the head domain of the 30S subunit. The protein is Small ribosomal subunit protein uS7c (rps7) of Ginkgo biloba (Ginkgo).